Here is a 288-residue protein sequence, read N- to C-terminus: Alpha/beta hydrolase domain-containing protein 17B (288 aa).

Active-site charge relay system residues include S170, D235, and H264.

It belongs to the AB hydrolase superfamily. ABHD17 family. Palmitoylated on cysteine residues located in a cysteine cluster at the N-terminus which promotes membrane localization.

The protein resides in the cell membrane. It is found in the recycling endosome membrane. Its subcellular location is the cell projection. It localises to the dendritic spine. The protein localises to the postsynaptic density membrane. It catalyses the reaction S-hexadecanoyl-L-cysteinyl-[protein] + H2O = L-cysteinyl-[protein] + hexadecanoate + H(+). Functionally, hydrolyzes fatty acids from S-acylated cysteine residues in proteins. The polypeptide is Alpha/beta hydrolase domain-containing protein 17B (Xenopus tropicalis (Western clawed frog)).